A 471-amino-acid polypeptide reads, in one-letter code: Cysteine--tRNA ligase (471 aa).

Cysteine 29 contributes to the Zn(2+) binding site. Residues 31 to 41 (PTVYNYIHIGN) carry the 'HIGH' region motif. Zn(2+) contacts are provided by cysteine 209, histidine 234, and glutamate 238. Residues 266 to 270 (KMSKS) carry the 'KMSKS' region motif. ATP is bound at residue lysine 269.

This sequence belongs to the class-I aminoacyl-tRNA synthetase family. Monomer. The cofactor is Zn(2+).

The protein localises to the cytoplasm. It catalyses the reaction tRNA(Cys) + L-cysteine + ATP = L-cysteinyl-tRNA(Cys) + AMP + diphosphate. This Listeria welshimeri serovar 6b (strain ATCC 35897 / DSM 20650 / CCUG 15529 / CIP 8149 / NCTC 11857 / SLCC 5334 / V8) protein is Cysteine--tRNA ligase.